The sequence spans 395 residues: Multidrug resistance protein MdtL (395 aa).

The next 12 membrane-spanning stretches (helical) occupy residues 4–24, 42–62, 69–89, 93–113, 131–151, 158–178, 217–237, 247–267, 271–291, 295–315, 328–350, and 355–377; these read FLLC…MYLV, IAFS…GKIA, PVAI…SRAS, LFLS…VVAF, LLNG…HLIM, SLFY…LFIL, VSVI…VMGF, ALTA…LGLF, TLML…SLAH, VTLF…GVAM, VASS…LAAI, and AMNM…IFSV.

It belongs to the major facilitator superfamily. DHA1 family. MdtL (TC 2.A.1.2.22) subfamily.

It is found in the cell inner membrane. In Salmonella schwarzengrund (strain CVM19633), this protein is Multidrug resistance protein MdtL.